A 196-amino-acid polypeptide reads, in one-letter code: DnaA initiator-associating protein DiaA (196 aa).

One can recognise an SIS domain in the interval 34 to 196 (LVQSLLNGNK…DNTLFPHQND (163 aa)).

This sequence belongs to the SIS family. DiaA subfamily. In terms of assembly, homotetramer; dimer of dimers.

Functionally, required for the timely initiation of chromosomal replication via direct interactions with the DnaA initiator protein. The polypeptide is DnaA initiator-associating protein DiaA (Yersinia pestis bv. Antiqua (strain Antiqua)).